A 110-amino-acid polypeptide reads, in one-letter code: UPF0122 protein gbs1018 (110 aa).

It belongs to the UPF0122 family.

Its function is as follows. Might take part in the signal recognition particle (SRP) pathway. This is inferred from the conservation of its genetic proximity to ftsY/ffh. May be a regulatory protein. The chain is UPF0122 protein gbs1018 from Streptococcus agalactiae serotype III (strain NEM316).